The primary structure comprises 99 residues: MKIAEEPSPSLGQTLEWLRKELSEMQIQDQSLLLTLRHLHSVLEELRADSAHWEDARSSGGTSPIRARAGSEGRGCQPVCSRGLAQLLRGEDSRRSSLP.

Residues 50 to 77 (SAHWEDARSSGGTSPIRARAGSEGRGCQ) are disordered.

This is an uncharacterized protein from Homo sapiens (Human).